The chain runs to 165 residues: CDP-archaeol synthase (165 aa).

The next 3 helical transmembrane spans lie at 4–24 (IVQLFLLIWPPYVANGSAVLA), 78–98 (LLDAFLLATAAIVGDLLGAFV), and 118–138 (FLLMALLVYSLYRELHIPLLL).

The protein belongs to the CDP-archaeol synthase family. It depends on Mg(2+) as a cofactor.

It is found in the cell membrane. The catalysed reaction is 2,3-bis-O-(geranylgeranyl)-sn-glycerol 1-phosphate + CTP + H(+) = CDP-2,3-bis-O-(geranylgeranyl)-sn-glycerol + diphosphate. It functions in the pathway membrane lipid metabolism; glycerophospholipid metabolism. Catalyzes the formation of CDP-2,3-bis-(O-geranylgeranyl)-sn-glycerol (CDP-archaeol) from 2,3-bis-(O-geranylgeranyl)-sn-glycerol 1-phosphate (DGGGP) and CTP. This reaction is the third ether-bond-formation step in the biosynthesis of archaeal membrane lipids. This Pyrobaculum calidifontis (strain DSM 21063 / JCM 11548 / VA1) protein is CDP-archaeol synthase.